The chain runs to 134 residues: Large ribosomal subunit protein bL21 (134 aa).

It belongs to the bacterial ribosomal protein bL21 family. In terms of assembly, part of the 50S ribosomal subunit. Contacts protein L20.

In terms of biological role, this protein binds to 23S rRNA in the presence of protein L20. The chain is Large ribosomal subunit protein bL21 from Pelagibacter ubique (strain HTCC1062).